We begin with the raw amino-acid sequence, 310 residues long: Ribosomal RNA small subunit methyltransferase H (310 aa).

S-adenosyl-L-methionine is bound by residues 32-34 (GGH), Asp-52, Phe-79, Asp-100, and Gln-107.

It belongs to the methyltransferase superfamily. RsmH family.

The protein localises to the cytoplasm. The catalysed reaction is cytidine(1402) in 16S rRNA + S-adenosyl-L-methionine = N(4)-methylcytidine(1402) in 16S rRNA + S-adenosyl-L-homocysteine + H(+). Specifically methylates the N4 position of cytidine in position 1402 (C1402) of 16S rRNA. The chain is Ribosomal RNA small subunit methyltransferase H from Geobacillus kaustophilus (strain HTA426).